Here is a 507-residue protein sequence, read N- to C-terminus: Prolyl carboxy peptidase like protein 5 (507 aa).

Positions 1–16 (MNIFISLAILIATTHC) are cleaved as a signal peptide. Asparagine 125 carries an N-linked (GlcNAc...) asparagine glycan. Catalysis depends on serine 172, which acts as the Charge relay system. N-linked (GlcNAc...) asparagine glycans are attached at residues asparagine 332 and asparagine 407. Active-site charge relay system residues include aspartate 439 and histidine 466.

The protein belongs to the peptidase S28 family.

The polypeptide is Prolyl carboxy peptidase like protein 5 (Caenorhabditis elegans).